We begin with the raw amino-acid sequence, 248 residues long: 1-(5-phosphoribosyl)-5-[(5-phosphoribosylamino)methylideneamino] imidazole-4-carboxamide isomerase (248 aa).

The active-site Proton acceptor is Asp-8. Catalysis depends on Asp-131, which acts as the Proton donor.

Belongs to the HisA/HisF family.

It is found in the cytoplasm. The enzyme catalyses 1-(5-phospho-beta-D-ribosyl)-5-[(5-phospho-beta-D-ribosylamino)methylideneamino]imidazole-4-carboxamide = 5-[(5-phospho-1-deoxy-D-ribulos-1-ylimino)methylamino]-1-(5-phospho-beta-D-ribosyl)imidazole-4-carboxamide. The protein operates within amino-acid biosynthesis; L-histidine biosynthesis; L-histidine from 5-phospho-alpha-D-ribose 1-diphosphate: step 4/9. This is 1-(5-phosphoribosyl)-5-[(5-phosphoribosylamino)methylideneamino] imidazole-4-carboxamide isomerase from Cupriavidus pinatubonensis (strain JMP 134 / LMG 1197) (Cupriavidus necator (strain JMP 134)).